Here is a 536-residue protein sequence, read N- to C-terminus: L-ornithine N(5)-monooxygenase SIDA (536 aa).

The tract at residues 1–25 is disordered; the sequence is MSPHRETTGDESTTTTVPQNGTNGA. Residues 115–123 and Q134 contribute to the FAD site; that span reads EKQTRFAWH. Residue K139 coordinates L-ornithine. V200 is a binding site for FAD. R310 provides a ligand contact to NADP(+). L-ornithine is bound by residues 324–327 and N354; that span reads NSIF. Residue 515–517 participates in FAD binding; sequence TLL. L-ornithine is bound at residue S518.

This sequence belongs to the lysine N(6)-hydroxylase/L-ornithine N(5)-oxygenase family. In terms of assembly, homotetramer. FAD serves as cofactor.

It catalyses the reaction L-ornithine + NADH + O2 = N(5)-hydroxy-L-ornithine + NAD(+) + H2O. The enzyme catalyses L-ornithine + NADPH + O2 = N(5)-hydroxy-L-ornithine + NADP(+) + H2O. It functions in the pathway siderophore biosynthesis. Functionally, L-ornithine N(5)-monooxygenase; part of the gene cluster that mediates the biosynthesis of at least 11 siderophores, including beauverichelin A, dimerumic acid (DA), Na-dimethyl coprogen (NADC), eleutherazine B, ferricrocin (FC), fusarinine A, fusarinine C (FsC), metachelin A, mevalonolactone, rhodotorulic acid (RA) and tenellin. This cocktail of siderophores for iron metabolism is essential for virulence, and more specifically for the fungal virulence in penetrating through the host cuticle. Siderophore synthesis is also involved in conidial germination under iron-deficient conditions. SIDA initiates the biosynthesis of these siderophores with the enzymatic hydroxylation of ornithine. SIDA is indispensable for the production of most siderophores including fusarinine C and ferricrocin but not mevalonolactone and eleutherazine B. However, SIDA mediates the metabolic interplay between synthesis of mevalonolactone and eleutherazine B and other siderophores. The polypeptide is L-ornithine N(5)-monooxygenase SIDA (Beauveria bassiana (strain ARSEF 2860) (White muscardine disease fungus)).